The chain runs to 276 residues: Dermonecrotic toxin LlSicTox-alphaIV3 (276 aa).

His5 is a catalytic residue. Positions 25 and 27 each coordinate Mg(2+). His41 acts as the Nucleophile in catalysis. Intrachain disulfides connect Cys45–Cys51 and Cys47–Cys192. Asp85 contacts Mg(2+).

The protein belongs to the arthropod phospholipase D family. Class II subfamily. Mg(2+) serves as cofactor. In terms of tissue distribution, expressed by the venom gland.

Its subcellular location is the secreted. It carries out the reaction an N-(acyl)-sphingosylphosphocholine = an N-(acyl)-sphingosyl-1,3-cyclic phosphate + choline. The catalysed reaction is an N-(acyl)-sphingosylphosphoethanolamine = an N-(acyl)-sphingosyl-1,3-cyclic phosphate + ethanolamine. It catalyses the reaction a 1-acyl-sn-glycero-3-phosphocholine = a 1-acyl-sn-glycero-2,3-cyclic phosphate + choline. The enzyme catalyses a 1-acyl-sn-glycero-3-phosphoethanolamine = a 1-acyl-sn-glycero-2,3-cyclic phosphate + ethanolamine. In terms of biological role, dermonecrotic toxins cleave the phosphodiester linkage between the phosphate and headgroup of certain phospholipids (sphingolipid and lysolipid substrates), forming an alcohol (often choline) and a cyclic phosphate. This toxin acts on sphingomyelin (SM). It may also act on ceramide phosphoethanolamine (CPE), lysophosphatidylcholine (LPC) and lysophosphatidylethanolamine (LPE), but not on lysophosphatidylserine (LPS), and lysophosphatidylglycerol (LPG). It acts by transphosphatidylation, releasing exclusively cyclic phosphate products as second products. Induces dermonecrosis, hemolysis, increased vascular permeability, edema, inflammatory response, and platelet aggregation. This chain is Dermonecrotic toxin LlSicTox-alphaIV3, found in Loxosceles laeta (South American recluse spider).